Consider the following 370-residue polypeptide: Calcium-binding protein 1 (370 aa).

A disordered region spans residues 1 to 198 (MGGGDGAAFK…GRGDSVPAAA (198 aa)). Glycine 2 carries N-myristoyl glycine lipidation. A lipid anchor (S-palmitoyl cysteine) is attached at glycine 4. 3 stretches are compositionally biased toward low complexity: residues 50–61 (HASAGPAAMSSH), 68–84 (KTSL…GGSR), and 148–157 (ALPAAASRPS). EF-hand domains lie at 225–260 (EEIE…MGYM), 279–296 (GHVD…KLLA), 302–337 (IGVK…LLGH), and 339–370 (VGHR…MMSR). Aspartate 238, aspartate 240, aspartate 242, tyrosine 244, and aspartate 249 together coordinate Ca(2+). Positions 238, 240, 242, and 244 each coordinate Mg(2+). Ca(2+) contacts are provided by aspartate 315, asparagine 317, aspartate 319, and glutamate 321. Serine 323 carries the post-translational modification Phosphoserine. Glutamate 326, aspartate 352, leucine 353, asparagine 354, aspartate 356, glycine 357, arginine 358, aspartate 360, and glutamate 363 together coordinate Ca(2+).

In terms of assembly, homodimer; when bound to calcium or magnesium. Interacts (via C-terminus) with ITPR1, ITPR2 and ITPR3. This binding is calcium dependent and the interaction correlates with calcium concentration. An additional calcium-independent interaction with the N-terminus of ITPR1 results in a decreased InsP(3) binding to the receptor. Interacts with CACNA1A (via C-terminal CDB motif) in the pre- and postsynaptic membranes. Interacts with CACNA1C (via C-terminal C and IQ motifs). The binding to the C motif is calcium independent whereas the binding to IQ requires the presence of calcium and is mutually exclusive with calmodulin binding. Interacts with CACNA1D. Interacts with TRPC5 (via C-terminus). Interacts (via EF-hands 1 and 2) at microtubules with MAP1LC3B. Interacts with MYO1C. Interacts (via EF-hands 1 and 2) with NSMF (via the central NLS-containing motif region), the interaction occurs in a calcium dependent manner after synaptic NMDA receptor stimulation and prevents nuclear import of NSMF. Interacts with SPACA9. In terms of processing, phosphorylated. The phosphorylation regulates the activity. As to expression, retina and brain. Somatodendritic compartment of neurons. Calbrain was found exclusively in brain where it is abundant in the hippocampus, habenular area in the epithalamus and in the cerebellum.

It localises to the cytoplasm. Its subcellular location is the cytoskeleton. The protein resides in the perinuclear region. The protein localises to the cell membrane. It is found in the golgi apparatus. It localises to the postsynaptic density. Its subcellular location is the cell cortex. Functionally, modulates calcium-dependent activity of inositol 1,4,5-triphosphate receptors (ITPRs). Inhibits agonist-induced intracellular calcium signaling. Enhances inactivation and does not support calcium-dependent facilitation of voltage-dependent P/Q-type calcium channels. Causes calcium-dependent facilitation and inhibits inactivation of L-type calcium channels by binding to the same sites as calmodulin in the C-terminal domain of CACNA1C, but has an opposite effect on channel function. Suppresses the calcium-dependent inactivation of CACNA1D. Inhibits TRPC5 channels. Prevents NMDA receptor-induced cellular degeneration. Required for the normal transfer of light signals through the retina. The chain is Calcium-binding protein 1 (CABP1) from Homo sapiens (Human).